The chain runs to 486 residues: Probable glucan endo-1,3-beta-glucosidase eglC (486 aa).

Positions 1–18 (MQLTQLLALALSLATSEA) are cleaved as a signal peptide. Asn84 carries N-linked (GlcNAc...) asparagine glycosylation. Glu128 serves as the catalytic Proton donor. N-linked (GlcNAc...) asparagine glycosylation is present at Asn183. Glu239 functions as the Nucleophile in the catalytic mechanism. N-linked (GlcNAc...) asparagine glycosylation is found at Asn315, Asn386, Asn396, and Asn404. Residues 330 to 458 (AAAGGVAGGS…SSGAASPSST (129 aa)) are disordered. Low complexity-rich tracts occupy residues 341–404 (GSAS…HGSN) and 413–424 (SVSNVSPSKSSS). The span at 430 to 442 (AATSMGASPSSVG) shows a compositional bias: polar residues. Over residues 445 to 458 (GPSKSSGAASPSST) the composition is skewed to low complexity. A lipid anchor (GPI-anchor amidated glycine) is attached at Gly463. Residues 464-486 (AATSVSAPVVHVVLLALMMVIAA) constitute a propeptide, removed in mature form.

Belongs to the glycosyl hydrolase 17 family. The GPI-anchor is attached to the protein in the endoplasmic reticulum and serves to target the protein to the cell surface. There, the glucosamine-inositol phospholipid moiety is cleaved off and the GPI-modified mannoprotein is covalently attached via its lipidless GPI glycan remnant to the 1,6-beta-glucan of the outer cell wall layer.

The protein localises to the cell membrane. The protein resides in the secreted. It is found in the cell wall. It catalyses the reaction Hydrolysis of (1-&gt;3)-beta-D-glucosidic linkages in (1-&gt;3)-beta-D-glucans.. Its function is as follows. Glucanases play a role in cell expansion during growth, in cell-cell fusion during mating, and in spore release during sporulation. This enzyme may be involved in beta-glucan degradation and also function biosynthetically as a transglycosylase. The chain is Probable glucan endo-1,3-beta-glucosidase eglC (eglC) from Aspergillus terreus (strain NIH 2624 / FGSC A1156).